The sequence spans 451 residues: MRECISIHIGQAGIQVGNACWELYCLEHGIQADGQMPGDKTIGGGDDAFNTFFSETGAGKHVPRAVFVDLEPTVIDEVRTGTYRQLFHPEQLISGKEDAANNFARGHYTIGKEIVDLCLDRIRKLADNCTGLQGFLVFNAVGGGTGSGLGSLLLERLSVDYGKKSKLGFTVYPSPQVSTSVVEPYNSVLSTHSLLEHTDVAVLLDNEAIYDICRRSLDIERPTYTNLNRLVSQVISSLTASLRFDGALNVDVNEFQTNLVPYPRIHFMLSSYAPVISAEKAYHEQLSVAEITNSAFEPSSMMAKCDPRHGKYMACCLMYRGDVVPKDVNAAVATIKTKRTIQFVDWCPTGFKCGINYQPPSVVPGGDLAKVQRAVCMISNSTSVVEVFSRIDHKFDLMYAKRAFVHWYVGEGMEEGEFSEAREDLAALEKDYEEVGAEFDEGEEGDEGDEY.

Q11 is a binding site for GTP. The residue at position 40 (K40) is an N6-acetyllysine. Positions 71, 144, 145, 179, 206, and 228 each coordinate GTP. E71 serves as a coordination point for Mg(2+). E254 is an active-site residue.

The protein belongs to the tubulin family. Dimer of alpha and beta chains. A typical microtubule is a hollow water-filled tube with an outer diameter of 25 nm and an inner diameter of 15 nM. Alpha-beta heterodimers associate head-to-tail to form protofilaments running lengthwise along the microtubule wall with the beta-tubulin subunit facing the microtubule plus end conferring a structural polarity. Microtubules usually have 13 protofilaments but different protofilament numbers can be found in some organisms and specialized cells. Mg(2+) is required as a cofactor. Undergoes a tyrosination/detyrosination cycle, the cyclic removal and re-addition of a C-terminal tyrosine residue by the enzymes tubulin tyrosine carboxypeptidase (TTCP) and tubulin tyrosine ligase (TTL), respectively. In terms of processing, acetylation of alpha chains at Lys-40 stabilizes microtubules and affects affinity and processivity of microtubule motors. This modification has a role in multiple cellular functions, ranging from cell motility, cell cycle progression or cell differentiation to intracellular trafficking and signaling.

The protein resides in the cytoplasm. The protein localises to the cytoskeleton. It carries out the reaction GTP + H2O = GDP + phosphate + H(+). Its function is as follows. Tubulin is the major constituent of microtubules, a cylinder consisting of laterally associated linear protofilaments composed of alpha- and beta-tubulin heterodimers. Microtubules grow by the addition of GTP-tubulin dimers to the microtubule end, where a stabilizing cap forms. Below the cap, tubulin dimers are in GDP-bound state, owing to GTPase activity of alpha-tubulin. The sequence is that of Tubulin alpha-1 chain (TUBA1) from Eleusine indica (Goosegrass).